Here is a 164-residue protein sequence, read N- to C-terminus: S-ribosylhomocysteine lyase (164 aa).

The Fe cation site is built by histidine 61, histidine 65, and cysteine 131.

Belongs to the LuxS family. Homodimer. It depends on Fe cation as a cofactor.

It carries out the reaction S-(5-deoxy-D-ribos-5-yl)-L-homocysteine = (S)-4,5-dihydroxypentane-2,3-dione + L-homocysteine. In terms of biological role, involved in the synthesis of autoinducer 2 (AI-2) which is secreted by bacteria and is used to communicate both the cell density and the metabolic potential of the environment. The regulation of gene expression in response to changes in cell density is called quorum sensing. Catalyzes the transformation of S-ribosylhomocysteine (RHC) to homocysteine (HC) and 4,5-dihydroxy-2,3-pentadione (DPD). This Bifidobacterium longum subsp. infantis (strain ATCC 15697 / DSM 20088 / JCM 1222 / NCTC 11817 / S12) protein is S-ribosylhomocysteine lyase.